A 95-amino-acid chain; its full sequence is Aspartyl/glutamyl-tRNA(Asn/Gln) amidotransferase subunit C (95 aa).

Belongs to the GatC family. In terms of assembly, heterotrimer of A, B and C subunits.

It catalyses the reaction L-glutamyl-tRNA(Gln) + L-glutamine + ATP + H2O = L-glutaminyl-tRNA(Gln) + L-glutamate + ADP + phosphate + H(+). It carries out the reaction L-aspartyl-tRNA(Asn) + L-glutamine + ATP + H2O = L-asparaginyl-tRNA(Asn) + L-glutamate + ADP + phosphate + 2 H(+). Its function is as follows. Allows the formation of correctly charged Asn-tRNA(Asn) or Gln-tRNA(Gln) through the transamidation of misacylated Asp-tRNA(Asn) or Glu-tRNA(Gln) in organisms which lack either or both of asparaginyl-tRNA or glutaminyl-tRNA synthetases. The reaction takes place in the presence of glutamine and ATP through an activated phospho-Asp-tRNA(Asn) or phospho-Glu-tRNA(Gln). The chain is Aspartyl/glutamyl-tRNA(Asn/Gln) amidotransferase subunit C from Pseudomonas fluorescens (strain SBW25).